The sequence spans 342 residues: uncharacterized protein (342 aa).

The signal sequence occupies residues 1–18 (MWKKLMLLLLMAIPLVSA).

This is an uncharacterized protein from Methanocaldococcus jannaschii (strain ATCC 43067 / DSM 2661 / JAL-1 / JCM 10045 / NBRC 100440) (Methanococcus jannaschii).